The chain runs to 294 residues: tRNA pseudouridine synthase B (294 aa).

Residue aspartate 40 is the Nucleophile of the active site.

Belongs to the pseudouridine synthase TruB family. Type 1 subfamily.

It carries out the reaction uridine(55) in tRNA = pseudouridine(55) in tRNA. Its function is as follows. Responsible for synthesis of pseudouridine from uracil-55 in the psi GC loop of transfer RNAs. The sequence is that of tRNA pseudouridine synthase B from Synechococcus elongatus (strain ATCC 33912 / PCC 7942 / FACHB-805) (Anacystis nidulans R2).